Here is a 256-residue protein sequence, read N- to C-terminus: Thiazole synthase (256 aa).

Lys-96 functions as the Schiff-base intermediate with DXP in the catalytic mechanism. 1-deoxy-D-xylulose 5-phosphate contacts are provided by residues Gly-157, 183–184, and 205–206; these read AG and NT.

It belongs to the ThiG family. Homotetramer. Forms heterodimers with either ThiH or ThiS.

It localises to the cytoplasm. The enzyme catalyses [ThiS sulfur-carrier protein]-C-terminal-Gly-aminoethanethioate + 2-iminoacetate + 1-deoxy-D-xylulose 5-phosphate = [ThiS sulfur-carrier protein]-C-terminal Gly-Gly + 2-[(2R,5Z)-2-carboxy-4-methylthiazol-5(2H)-ylidene]ethyl phosphate + 2 H2O + H(+). The protein operates within cofactor biosynthesis; thiamine diphosphate biosynthesis. Its function is as follows. Catalyzes the rearrangement of 1-deoxy-D-xylulose 5-phosphate (DXP) to produce the thiazole phosphate moiety of thiamine. Sulfur is provided by the thiocarboxylate moiety of the carrier protein ThiS. In vitro, sulfur can be provided by H(2)S. The polypeptide is Thiazole synthase (Bacillus cereus (strain AH187)).